We begin with the raw amino-acid sequence, 254 residues long: tRNA (guanine-N(7)-)-methyltransferase (254 aa).

Residues 1–34 (MNTNTPAHPPEGAPLSEATQAALASAEHAPDSPG) form a disordered region. The S-adenosyl-L-methionine site is built by E87, E112, D139, and D162. D162 is a catalytic residue. Substrate-binding positions include K166, D198, and 233-236 (TKFE).

It belongs to the class I-like SAM-binding methyltransferase superfamily. TrmB family.

It carries out the reaction guanosine(46) in tRNA + S-adenosyl-L-methionine = N(7)-methylguanosine(46) in tRNA + S-adenosyl-L-homocysteine. The protein operates within tRNA modification; N(7)-methylguanine-tRNA biosynthesis. Its function is as follows. Catalyzes the formation of N(7)-methylguanine at position 46 (m7G46) in tRNA. The sequence is that of tRNA (guanine-N(7)-)-methyltransferase from Bordetella pertussis (strain Tohama I / ATCC BAA-589 / NCTC 13251).